The primary structure comprises 90 residues: Small ribosomal subunit protein uS15 (90 aa).

The protein belongs to the universal ribosomal protein uS15 family. In terms of assembly, part of the 30S ribosomal subunit. Forms a bridge to the 50S subunit in the 70S ribosome, contacting the 23S rRNA.

Functionally, one of the primary rRNA binding proteins, it binds directly to 16S rRNA where it helps nucleate assembly of the platform of the 30S subunit by binding and bridging several RNA helices of the 16S rRNA. In terms of biological role, forms an intersubunit bridge (bridge B4) with the 23S rRNA of the 50S subunit in the ribosome. This chain is Small ribosomal subunit protein uS15, found in Campylobacter concisus (strain 13826).